Reading from the N-terminus, the 681-residue chain is Probable L-type lectin-domain containing receptor kinase S.7 (681 aa).

The N-terminal stretch at 1–21 (MSLSRKLLVIFFTWITALSMS) is a signal peptide. Residues 22–305 (KPIFVSSDNM…PSKKRRHRHN (284 aa)) lie on the Extracellular side of the membrane. The interval 30-265 (NMNFTFKSFT…IHLIENWSFK (236 aa)) is legume-lectin like. 7 N-linked (GlcNAc...) asparagine glycosylation sites follow: asparagine 32, asparagine 42, asparagine 86, asparagine 121, asparagine 135, asparagine 261, and asparagine 281. Residues 306–326 (LAIGLGISCPVLICLALFVFG) form a helical membrane-spanning segment. Topologically, residues 327–681 (YFTLKKWKSV…EGDSIVYVVS (355 aa)) are cytoplasmic. One can recognise a Protein kinase domain in the interval 365 to 643 (FHSSRVIGRG…RVLQILNNEI (279 aa)). ATP contacts are provided by residues 371–379 (IGRGAFGNV) and lysine 394. Catalysis depends on aspartate 493, which acts as the Proton acceptor.

The protein in the C-terminal section; belongs to the protein kinase superfamily. Ser/Thr protein kinase family. It in the N-terminal section; belongs to the leguminous lectin family.

It is found in the cell membrane. The enzyme catalyses L-seryl-[protein] + ATP = O-phospho-L-seryl-[protein] + ADP + H(+). It catalyses the reaction L-threonyl-[protein] + ATP = O-phospho-L-threonyl-[protein] + ADP + H(+). Its function is as follows. Involved in resistance response to the pathogenic oomycetes Phytophthora infestans and Phytophthora capsici. This Arabidopsis thaliana (Mouse-ear cress) protein is Probable L-type lectin-domain containing receptor kinase S.7.